A 76-amino-acid polypeptide reads, in one-letter code: MIYKVFYQETKERSPRREQTKSLYLDIDAETELEGRIQARQIIEKNTAYNIEFIELLSEKALEYEKETGVFEVTEF.

The protein belongs to the RNA polymerase subunit epsilon family. In terms of assembly, RNAP is composed of a core of 2 alpha, a beta and a beta' subunit. The core is associated with a delta subunit, and at least one of epsilon or omega. When a sigma factor is associated with the core the holoenzyme is formed, which can initiate transcription.

It carries out the reaction RNA(n) + a ribonucleoside 5'-triphosphate = RNA(n+1) + diphosphate. A non-essential component of RNA polymerase (RNAP). This is DNA-directed RNA polymerase subunit epsilon from Streptococcus thermophilus (strain CNRZ 1066).